A 144-amino-acid chain; its full sequence is 3-dehydroquinate dehydratase (144 aa).

Y23 functions as the Proton acceptor in the catalytic mechanism. Residues N74, H80, and D87 each contribute to the substrate site. Residue H100 is the Proton donor of the active site. Residues 101–102 (LS) and R111 contribute to the substrate site.

This sequence belongs to the type-II 3-dehydroquinase family. In terms of assembly, homododecamer.

It carries out the reaction 3-dehydroquinate = 3-dehydroshikimate + H2O. Its pathway is metabolic intermediate biosynthesis; chorismate biosynthesis; chorismate from D-erythrose 4-phosphate and phosphoenolpyruvate: step 3/7. Functionally, catalyzes a trans-dehydration via an enolate intermediate. This Haemophilus ducreyi (strain 35000HP / ATCC 700724) protein is 3-dehydroquinate dehydratase.